A 256-amino-acid polypeptide reads, in one-letter code: Small ribosomal subunit protein eS1 (256 aa).

Residues 1-18 (MAVGKNKRLSKGKKGLKK) are compositionally biased toward basic residues. Positions 1 to 22 (MAVGKNKRLSKGKKGLKKKTQD) are disordered. A2 is subject to N-acetylalanine; partial.

It belongs to the eukaryotic ribosomal protein eS1 family. In terms of assembly, component of the small ribosomal subunit (SSU). Mature N.crassa ribosomes consist of a small (40S) and a large (60S) subunit. The 40S small subunit contains 1 molecule of ribosomal RNA (18S rRNA) and at least 32 different proteins. The large 60S subunit contains 3 rRNA molecules (26S, 5.8S and 5S rRNA) and at least 42 different proteins.

The protein localises to the cytoplasm. Functionally, component of the ribosome, a large ribonucleoprotein complex responsible for the synthesis of proteins in the cell. The small ribosomal subunit (SSU) binds messenger RNAs (mRNAs) and translates the encoded message by selecting cognate aminoacyl-transfer RNA (tRNA) molecules. The large subunit (LSU) contains the ribosomal catalytic site termed the peptidyl transferase center (PTC), which catalyzes the formation of peptide bonds, thereby polymerizing the amino acids delivered by tRNAs into a polypeptide chain. The nascent polypeptides leave the ribosome through a tunnel in the LSU and interact with protein factors that function in enzymatic processing, targeting, and the membrane insertion of nascent chains at the exit of the ribosomal tunnel. The protein is Small ribosomal subunit protein eS1 (rps1) of Neurospora crassa (strain ATCC 24698 / 74-OR23-1A / CBS 708.71 / DSM 1257 / FGSC 987).